We begin with the raw amino-acid sequence, 333 residues long: tRNA N6-adenosine threonylcarbamoyltransferase (333 aa).

Residues His-118 and His-122 each coordinate Fe cation. Substrate contacts are provided by residues 140 to 144 (VVSGG), Asp-173, Gly-186, and Asn-274. A Fe cation-binding site is contributed by Asp-298.

It belongs to the KAE1 / TsaD family. It depends on Fe(2+) as a cofactor.

Its subcellular location is the cytoplasm. The catalysed reaction is L-threonylcarbamoyladenylate + adenosine(37) in tRNA = N(6)-L-threonylcarbamoyladenosine(37) in tRNA + AMP + H(+). Functionally, required for the formation of a threonylcarbamoyl group on adenosine at position 37 (t(6)A37) in tRNAs that read codons beginning with adenine. Is involved in the transfer of the threonylcarbamoyl moiety of threonylcarbamoyl-AMP (TC-AMP) to the N6 group of A37, together with TsaE and TsaB. TsaD likely plays a direct catalytic role in this reaction. The sequence is that of tRNA N6-adenosine threonylcarbamoyltransferase from Deinococcus geothermalis (strain DSM 11300 / CIP 105573 / AG-3a).